The chain runs to 500 residues: Aspartyl/glutamyl-tRNA(Asn/Gln) amidotransferase subunit B (500 aa).

It belongs to the GatB/GatE family. GatB subfamily. Heterotrimer of A, B and C subunits.

The catalysed reaction is L-glutamyl-tRNA(Gln) + L-glutamine + ATP + H2O = L-glutaminyl-tRNA(Gln) + L-glutamate + ADP + phosphate + H(+). It carries out the reaction L-aspartyl-tRNA(Asn) + L-glutamine + ATP + H2O = L-asparaginyl-tRNA(Asn) + L-glutamate + ADP + phosphate + 2 H(+). Its function is as follows. Allows the formation of correctly charged Asn-tRNA(Asn) or Gln-tRNA(Gln) through the transamidation of misacylated Asp-tRNA(Asn) or Glu-tRNA(Gln) in organisms which lack either or both of asparaginyl-tRNA or glutaminyl-tRNA synthetases. The reaction takes place in the presence of glutamine and ATP through an activated phospho-Asp-tRNA(Asn) or phospho-Glu-tRNA(Gln). The protein is Aspartyl/glutamyl-tRNA(Asn/Gln) amidotransferase subunit B of Thermosynechococcus vestitus (strain NIES-2133 / IAM M-273 / BP-1).